Reading from the N-terminus, the 160-residue chain is SsrA-binding protein (160 aa).

This sequence belongs to the SmpB family.

It localises to the cytoplasm. Functionally, required for rescue of stalled ribosomes mediated by trans-translation. Binds to transfer-messenger RNA (tmRNA), required for stable association of tmRNA with ribosomes. tmRNA and SmpB together mimic tRNA shape, replacing the anticodon stem-loop with SmpB. tmRNA is encoded by the ssrA gene; the 2 termini fold to resemble tRNA(Ala) and it encodes a 'tag peptide', a short internal open reading frame. During trans-translation Ala-aminoacylated tmRNA acts like a tRNA, entering the A-site of stalled ribosomes, displacing the stalled mRNA. The ribosome then switches to translate the ORF on the tmRNA; the nascent peptide is terminated with the 'tag peptide' encoded by the tmRNA and targeted for degradation. The ribosome is freed to recommence translation, which seems to be the essential function of trans-translation. The protein is SsrA-binding protein of Escherichia coli O6:K15:H31 (strain 536 / UPEC).